The chain runs to 659 residues: Threonine--tRNA ligase (659 aa).

The TGS domain maps to 1-61 (MIDLIFPDGS…TPDLLGGGNR (61 aa)). The segment at 249–541 (DHRKLGKTMD…LLENYAGHLP (293 aa)) is catalytic. Positions 341, 392, and 518 each coordinate Zn(2+). The interval 637–659 (EEATPPDLARDRAVAAPAELAQA) is disordered.

Belongs to the class-II aminoacyl-tRNA synthetase family. In terms of assembly, homodimer. Zn(2+) is required as a cofactor.

It is found in the cytoplasm. It carries out the reaction tRNA(Thr) + L-threonine + ATP = L-threonyl-tRNA(Thr) + AMP + diphosphate + H(+). Catalyzes the attachment of threonine to tRNA(Thr) in a two-step reaction: L-threonine is first activated by ATP to form Thr-AMP and then transferred to the acceptor end of tRNA(Thr). Also edits incorrectly charged L-seryl-tRNA(Thr). The chain is Threonine--tRNA ligase from Caulobacter sp. (strain K31).